A 514-amino-acid chain; its full sequence is 2,3-bisphosphoglycerate-independent phosphoglycerate mutase (514 aa).

Mn(2+) is bound by residues aspartate 14 and serine 64. Residue serine 64 is the Phosphoserine intermediate of the active site. Substrate contacts are provided by residues histidine 125, 155 to 156, arginine 187, arginine 193, 263 to 266, and lysine 336; these read RD and RADR. Positions 403, 407, 444, 445, and 463 each coordinate Mn(2+).

Belongs to the BPG-independent phosphoglycerate mutase family. As to quaternary structure, monomer. Mn(2+) serves as cofactor.

The enzyme catalyses (2R)-2-phosphoglycerate = (2R)-3-phosphoglycerate. The protein operates within carbohydrate degradation; glycolysis; pyruvate from D-glyceraldehyde 3-phosphate: step 3/5. Functionally, catalyzes the interconversion of 2-phosphoglycerate and 3-phosphoglycerate. This Escherichia coli (strain ATCC 8739 / DSM 1576 / NBRC 3972 / NCIMB 8545 / WDCM 00012 / Crooks) protein is 2,3-bisphosphoglycerate-independent phosphoglycerate mutase.